The following is a 420-amino-acid chain: Senescence-associated protein SPA15, chloroplastic (420 aa).

The N-terminal 68 residues, 1–68, are a transit peptide targeting the chloroplast; that stretch reads MAKPNGIIYS…YIATRGSSLR (68 aa). The segment at 85–111 is disordered; sequence EYRDSSDTSSMQGKDKDPASLGKSGTP.

Belongs to the ATA15/OSA15 family. As to expression, expressed in leaves.

The protein resides in the plastid. It localises to the chloroplast. In terms of biological role, may be involved in the regulation of leaf senescence. The polypeptide is Senescence-associated protein SPA15, chloroplastic (Ipomoea batatas (Sweet potato)).